We begin with the raw amino-acid sequence, 187 residues long: Protein lethal(2)essential for life (187 aa).

The sHSP domain maps to 61-170 (NSLQKQESGS…TERLVQITQT (110 aa)). The disordered stretch occupies residues 151–187 (APMKALPPPQTERLVQITQTGPSSKEDNAKKVETSTA). Residues 174–187 (SKEDNAKKVETSTA) are compositionally biased toward basic and acidic residues.

Belongs to the small heat shock protein (HSP20) family. Ubiquitously expressed during embryogenesis with no sign of tissue specificity in expression up to stage 16.

Its function is as follows. Vital role in embryonic development. The protein is Protein lethal(2)essential for life (l(2)efl) of Drosophila melanogaster (Fruit fly).